Consider the following 208-residue polypeptide: Large ribosomal subunit protein uL4 (208 aa).

The tract at residues 49–78 (KAKGISDISGTTAKPYRQKHTGRARQGSLR) is disordered.

It belongs to the universal ribosomal protein uL4 family. Part of the 50S ribosomal subunit.

In terms of biological role, one of the primary rRNA binding proteins, this protein initially binds near the 5'-end of the 23S rRNA. It is important during the early stages of 50S assembly. It makes multiple contacts with different domains of the 23S rRNA in the assembled 50S subunit and ribosome. Forms part of the polypeptide exit tunnel. The protein is Large ribosomal subunit protein uL4 of Anaplasma phagocytophilum (strain HZ).